The primary structure comprises 101 residues: Iron-sulfur cluster assembly protein CyaY (101 aa).

This sequence belongs to the frataxin family.

In terms of biological role, involved in iron-sulfur (Fe-S) cluster assembly. May act as a regulator of Fe-S biogenesis. The polypeptide is Iron-sulfur cluster assembly protein CyaY (Actinobacillus pleuropneumoniae serotype 7 (strain AP76)).